A 305-amino-acid polypeptide reads, in one-letter code: Glycine cleavage system transcriptional activator (305 aa).

Residues 6 to 63 (PPLNALRVFDAAARHLSFTRAAEELFVTQAAVSHQIKSLEDFLGLKLFRRRNRSLLLT) form the HTH lysR-type domain. A DNA-binding region (H-T-H motif) is located at residues 23-42 (FTRAAEELFVTQAAVSHQIK).

The protein belongs to the LysR transcriptional regulatory family.

Its subcellular location is the cytoplasm. Regulatory protein for the glycine cleavage system operon (gcv). Mediates activation of gcv by glycine and repression by purines. GcvA is negatively autoregulated. Binds to three sites upstream of the gcv promoter. The protein is Glycine cleavage system transcriptional activator (gcvA) of Escherichia coli O157:H7.